Reading from the N-terminus, the 519-residue chain is 4-nitrophenol 2-monooxygenase, oxygenase component (519 aa).

The protein belongs to the FADH(2)-utilizing monooxygenase family. In terms of assembly, homotetramer. 4-nitrophenol 2-monooxygenase complex consists of an oxygenase component NphA1 and a flavin reductase component NphA2. It depends on FAD as a cofactor.

It carries out the reaction 4-nitrophenol + NADH + O2 + H(+) = 4-nitrocatechol + NAD(+) + H2O. Its activity is regulated as follows. Partially inhibited by concentrations of FAD above 10 uM and completely inhibited by concentrations above 50 uM. Utilizes the flavins supplied by NphA2 to catalyze the degradation of 4-nitrophenol (4-NP) via 4-nitrocatechol (4-NC) which is used as the sole carbon, nitrogen, and energy source. Can also degrade phenol and 4-chlorophenol as rapidly as 4-NP. The chain is 4-nitrophenol 2-monooxygenase, oxygenase component (nphA1) from Rhodococcus sp.